Consider the following 206-residue polypeptide: MTDTPTKQETQSNKDNVPGAIPVEQKKNNRNDRKRNRRGDSKNLERDSDWQERVVQIRRVSKTVKGGKKMSFRAIVVVGNEKGQVGVGVGKAGDVIGAVRKGVSDGKKNLVRVPLTPNNSIPTLSKGRDGAANVLIRPAAPGTGVIAGGSIRTVLELAGIKNVLAKRLGSKTPLNNARAAMVALSQLRTHKSASRERGISLEQLYS.

Positions 1 to 15 are enriched in polar residues; that stretch reads MTDTPTKQETQSNKD. The interval 1–50 is disordered; it reads MTDTPTKQETQSNKDNVPGAIPVEQKKNNRNDRKRNRRGDSKNLERDSDW. Residues 38–50 show a composition bias toward basic and acidic residues; sequence RGDSKNLERDSDW. Residues 50-113 enclose the S5 DRBM domain; it reads WQERVVQIRR…SDGKKNLVRV (64 aa).

The protein belongs to the universal ribosomal protein uS5 family. As to quaternary structure, part of the 30S ribosomal subunit. Contacts proteins S4 and S8.

Functionally, with S4 and S12 plays an important role in translational accuracy. In terms of biological role, located at the back of the 30S subunit body where it stabilizes the conformation of the head with respect to the body. This Prochlorococcus marinus (strain MIT 9215) protein is Small ribosomal subunit protein uS5.